The following is a 255-amino-acid chain: uncharacterized protein (255 aa).

Belongs to the methyltransferase superfamily.

This is an uncharacterized protein from Bacillus subtilis (strain 168).